Consider the following 85-residue polypeptide: SPbeta prophage-derived uncharacterized protein YoqG (85 aa).

The protein is SPbeta prophage-derived uncharacterized protein YoqG (yoqG) of Bacillus subtilis (strain 168).